Consider the following 425-residue polypeptide: Enolase (425 aa).

Residue Q163 participates in (2R)-2-phosphoglycerate binding. E205 serves as the catalytic Proton donor. Positions 242, 285, and 312 each coordinate Mg(2+). (2R)-2-phosphoglycerate is bound by residues K337, R366, S367, and K388. The active-site Proton acceptor is K337.

This sequence belongs to the enolase family. The cofactor is Mg(2+).

It localises to the cytoplasm. It is found in the secreted. Its subcellular location is the cell surface. The catalysed reaction is (2R)-2-phosphoglycerate = phosphoenolpyruvate + H2O. It participates in carbohydrate degradation; glycolysis; pyruvate from D-glyceraldehyde 3-phosphate: step 4/5. Functionally, catalyzes the reversible conversion of 2-phosphoglycerate (2-PG) into phosphoenolpyruvate (PEP). It is essential for the degradation of carbohydrates via glycolysis. The protein is Enolase of Ruegeria sp. (strain TM1040) (Silicibacter sp.).